We begin with the raw amino-acid sequence, 129 residues long: Phosphoribosyl-AMP cyclohydrolase (129 aa).

Asp76 lines the Mg(2+) pocket. Zn(2+) is bound at residue Cys77. Mg(2+) is bound by residues Asp78 and Asp80. The Zn(2+) site is built by Cys97 and Cys104.

Belongs to the PRA-CH family. In terms of assembly, homodimer. It depends on Mg(2+) as a cofactor. The cofactor is Zn(2+).

Its subcellular location is the cytoplasm. It carries out the reaction 1-(5-phospho-beta-D-ribosyl)-5'-AMP + H2O = 1-(5-phospho-beta-D-ribosyl)-5-[(5-phospho-beta-D-ribosylamino)methylideneamino]imidazole-4-carboxamide. It participates in amino-acid biosynthesis; L-histidine biosynthesis; L-histidine from 5-phospho-alpha-D-ribose 1-diphosphate: step 3/9. In terms of biological role, catalyzes the hydrolysis of the adenine ring of phosphoribosyl-AMP. This Leptothrix cholodnii (strain ATCC 51168 / LMG 8142 / SP-6) (Leptothrix discophora (strain SP-6)) protein is Phosphoribosyl-AMP cyclohydrolase.